The sequence spans 147 residues: HTH-type transcriptional regulator MgrA (147 aa).

One can recognise an HTH marR-type domain in the interval 8–139 (KEQLCFSLYN…LNRLLGKVIH (132 aa)). The segment at residues 55-78 (VKKVVTELALDTGTVSPLLKRMEQ) is a DNA-binding region (H-T-H motif).

Its subcellular location is the cytoplasm. Functionally, regulatory protein involved in autolytic activity, multidrug resistance and virulence. Controls autolysis by inactivating LytM, LytN (autolysins) and SarV (autolysis activator) and activating ArlRS, LrgAB and LytSR (autolysis inhibitors). Acts as a dual regulator for resistance to multiple drugs by inactivating NorB and tet38 and activating NorA. Positively controls the expression of virulence accessory gene regulator (agr) to promote alpha-hemolysin (hla) transcription and down-regulates staphylococcal accessory regulator (sarS), leading to repression of surface protein A (spa). Binds directly to hla promoter to augment its activation. Binds to sarS promoter to down-regulate spa expression. The sequence is that of HTH-type transcriptional regulator MgrA (mgrA) from Staphylococcus aureus (strain NCTC 8325 / PS 47).